The sequence spans 373 residues: Chaperone protein DnaJ (373 aa).

Residues 4 to 68 (DFYEILGVSR…QARANYDRFG (65 aa)) form the J domain. Residues 132-214 (GGEKEIRINH…CGGQGHIQVS (83 aa)) form a CR-type zinc finger. Zn(2+) contacts are provided by Cys145, Cys148, Cys162, Cys165, Cys188, Cys191, Cys202, and Cys205. CXXCXGXG motif repeat units lie at residues 145–152 (CKTCQGTG), 162–169 (CSTCGGVG), 188–195 (CPTCGGSG), and 202–209 (CESCGGQG).

The protein belongs to the DnaJ family. Homodimer. The cofactor is Zn(2+).

It is found in the cytoplasm. Functionally, participates actively in the response to hyperosmotic and heat shock by preventing the aggregation of stress-denatured proteins and by disaggregating proteins, also in an autonomous, DnaK-independent fashion. Unfolded proteins bind initially to DnaJ; upon interaction with the DnaJ-bound protein, DnaK hydrolyzes its bound ATP, resulting in the formation of a stable complex. GrpE releases ADP from DnaK; ATP binding to DnaK triggers the release of the substrate protein, thus completing the reaction cycle. Several rounds of ATP-dependent interactions between DnaJ, DnaK and GrpE are required for fully efficient folding. Also involved, together with DnaK and GrpE, in the DNA replication of plasmids through activation of initiation proteins. The polypeptide is Chaperone protein DnaJ (Thermosynechococcus vestitus (strain NIES-2133 / IAM M-273 / BP-1)).